We begin with the raw amino-acid sequence, 459 residues long: Protein king tubby (459 aa).

Positions 114–205 are disordered; the sequence is HELEDEESSP…SNGAGGESEG (92 aa). Over residues 123–155 the composition is skewed to polar residues; it reads PVTVIEQQQTAPHSANSTHSQRPSTTRQPSFND. Phosphoserine is present on Ser-152.

This sequence belongs to the TUB family.

The protein localises to the cytoplasm. It is found in the nucleus. Its subcellular location is the cell projection. The protein resides in the cilium membrane. It localises to the rhabdomere. The protein is Protein king tubby of Drosophila persimilis (Fruit fly).